Here is a 373-residue protein sequence, read N- to C-terminus: NADPH-dependent 3-keto-steroid reductase HSD3B3 (373 aa).

Residues G10 to L15, Y155, and K159 contribute to the NADP(+) site. K159 (proton donor) is an active-site residue. Residues V288–V308 traverse the membrane as a helical segment.

It belongs to the 3-beta-HSD family. As to expression, high levels in adrenal gland, kidney and male liver (at protein level). Low levels in female liver (at protein level). Expressed in ovaries (at protein level).

Its subcellular location is the endoplasmic reticulum membrane. It is found in the mitochondrion membrane. The enzyme catalyses a 3beta-hydroxysteroid + NADP(+) = a 3-oxosteroid + NADPH + H(+). It catalyses the reaction 5alpha-androstane-3beta,17beta-diol + NADP(+) = 17beta-hydroxy-5alpha-androstan-3-one + NADPH + H(+). The protein operates within steroid metabolism. Responsible for the reduction of the oxo group on the C-3 of 5alpha-androstane steroids. Catalyzes the conversion of dihydrotestosterone to its inactive form 5alpha-androstanediol, that does not bind androgen receptor/AR. Does not function as an isomerase. This is NADPH-dependent 3-keto-steroid reductase HSD3B3 (HSD3B3) from Mesocricetus auratus (Golden hamster).